Consider the following 394-residue polypeptide: NAD(P)H-quinone oxidoreductase subunit H (394 aa).

The protein belongs to the complex I 49 kDa subunit family. As to quaternary structure, NDH-1 can be composed of about 15 different subunits; different subcomplexes with different compositions have been identified which probably have different functions.

The protein localises to the cellular thylakoid membrane. The enzyme catalyses a plastoquinone + NADH + (n+1) H(+)(in) = a plastoquinol + NAD(+) + n H(+)(out). It catalyses the reaction a plastoquinone + NADPH + (n+1) H(+)(in) = a plastoquinol + NADP(+) + n H(+)(out). In terms of biological role, NDH-1 shuttles electrons from an unknown electron donor, via FMN and iron-sulfur (Fe-S) centers, to quinones in the respiratory and/or the photosynthetic chain. The immediate electron acceptor for the enzyme in this species is believed to be plastoquinone. Couples the redox reaction to proton translocation, and thus conserves the redox energy in a proton gradient. Cyanobacterial NDH-1 also plays a role in inorganic carbon-concentration. This chain is NAD(P)H-quinone oxidoreductase subunit H, found in Prochlorococcus marinus (strain NATL2A).